The primary structure comprises 486 residues: H2.0-like homeobox protein (486 aa).

Disordered regions lie at residues 83–173 (ASFQ…SSKD) and 330–486 (KWRH…LGGL). Residues 125 to 135 (QQQQQQQQPQQ) are compositionally biased toward low complexity. The segment at residues 276–335 (RSWSRAVFSNLQRKGLEKRFEIQKYVTKPDRKQLAAMLGLTDAQVKVWFQNRRMKWRHSK) is a DNA-binding region (homeobox). 2 stretches are compositionally biased toward basic and acidic residues: residues 334–349 (SKEA…EAGE) and 363–372 (EERSPSRSEG). The segment covering 373–383 (EAESESSDPES) has biased composition (acidic residues). The segment covering 390 to 401 (DTERTEGTERSL) has biased composition (basic and acidic residues). Over residues 409–420 (ASAAGALLAASS) the composition is skewed to low complexity. Positions 421–440 (GGSGGSGGGGGGGFNFGGLS) are enriched in gly residues. Residues 441 to 474 (SGSTTSAGSSGSHSSGGASELLPAPQPSLSSAPK) are compositionally biased toward low complexity. Residues 475 to 486 (SPEPVPAPLGGL) show a composition bias toward pro residues.

It belongs to the H2.0 homeobox family.

It localises to the nucleus. In terms of biological role, transcription factor required for TBX21/T-bet-dependent maturation of Th1 cells as well as maintenance of Th1-specific gene expression. Involved in embryogenesis and hematopoiesis. The chain is H2.0-like homeobox protein (HLX) from Bos taurus (Bovine).